Reading from the N-terminus, the 69-residue chain is MSVLTPLLLRSLTGSARRLMVPRAQVHSKPAREQLGVLDITIGLTSCFVCCLLPAGWVLSHLESYKKRE.

The transit peptide at 1–25 directs the protein to the mitochondrion; the sequence is MSVLTPLLLRSLTGSARRLMVPRAQ. The SIFI-degron motif lies at 2-19; the sequence is SVLTPLLLRSLTGSARRL. At 26-36 the chain is on the mitochondrial matrix side; that stretch reads VHSKPAREQLG. Residues 37–60 form a helical membrane-spanning segment; it reads VLDITIGLTSCFVCCLLPAGWVLS. At 61-69 the chain is on the mitochondrial intermembrane side; sequence HLESYKKRE.

It belongs to the cytochrome c oxidase VIII family. As to quaternary structure, component of the cytochrome c oxidase (complex IV, CIV), a multisubunit enzyme composed of 14 subunits. The complex is composed of a catalytic core of 3 subunits MT-CO1, MT-CO2 and MT-CO3, encoded in the mitochondrial DNA, and 11 supernumerary subunits COX4I, COX5A, COX5B, COX6A, COX6B, COX6C, COX7A, COX7B, COX7C, COX8 and NDUFA4, which are encoded in the nuclear genome. The complex exists as a monomer or a dimer and forms supercomplexes (SCs) in the inner mitochondrial membrane with NADH-ubiquinone oxidoreductase (complex I, CI) and ubiquinol-cytochrome c oxidoreductase (cytochrome b-c1 complex, complex III, CIII), resulting in different assemblies (supercomplex SCI(1)III(2)IV(1) and megacomplex MCI(2)III(2)IV(2)). In terms of processing, in response to mitochondrial stress, the precursor protein is ubiquitinated by the SIFI complex in the cytoplasm before mitochondrial import, leading to its degradation. Within the SIFI complex, UBR4 initiates ubiquitin chain that are further elongated or branched by KCMF1.

The protein resides in the mitochondrion inner membrane. It functions in the pathway energy metabolism; oxidative phosphorylation. Component of the cytochrome c oxidase, the last enzyme in the mitochondrial electron transport chain which drives oxidative phosphorylation. The respiratory chain contains 3 multisubunit complexes succinate dehydrogenase (complex II, CII), ubiquinol-cytochrome c oxidoreductase (cytochrome b-c1 complex, complex III, CIII) and cytochrome c oxidase (complex IV, CIV), that cooperate to transfer electrons derived from NADH and succinate to molecular oxygen, creating an electrochemical gradient over the inner membrane that drives transmembrane transport and the ATP synthase. Cytochrome c oxidase is the component of the respiratory chain that catalyzes the reduction of oxygen to water. Electrons originating from reduced cytochrome c in the intermembrane space (IMS) are transferred via the dinuclear copper A center (CU(A)) of subunit 2 and heme A of subunit 1 to the active site in subunit 1, a binuclear center (BNC) formed by heme A3 and copper B (CU(B)). The BNC reduces molecular oxygen to 2 water molecules using 4 electrons from cytochrome c in the IMS and 4 protons from the mitochondrial matrix. In Mus musculus (Mouse), this protein is Cytochrome c oxidase subunit 8A, mitochondrial (Cox8a).